The following is a 375-amino-acid chain: CMP-N-acetylneuraminate-beta-1,4-galactoside alpha-2,3-sialyltransferase (375 aa).

Residues methionine 1–arginine 8 lie on the Cytoplasmic side of the membrane. The chain crosses the membrane as a helical; Signal-anchor for type II membrane protein span at residues asparagine 9–tryptophan 28. Residues lysine 29–isoleucine 375 lie on the Lumenal side of the membrane. 2 N-linked (GlcNAc...) asparagine glycosylation sites follow: asparagine 80 and asparagine 171. A disulfide bridge connects residues cysteine 160 and cysteine 314.

This sequence belongs to the glycosyltransferase 29 family. The soluble form derives from the membrane form by proteolytic processing. In terms of tissue distribution, highly expressed in adult skeletal muscle and in all fetal tissues examined and to a much lesser extent in placenta, lung and liver.

Its subcellular location is the golgi apparatus. It is found in the golgi stack membrane. The protein resides in the secreted. It catalyses the reaction a beta-D-galactosyl-(1-&gt;4)-N-acetyl-beta-D-glucosaminyl derivative + CMP-N-acetyl-beta-neuraminate = an N-acetyl-alpha-neuraminyl-(2-&gt;3)-beta-D-galactosyl-(1-&gt;4)-N-acetyl-beta-D-glucosaminyl derivative + CMP + H(+). The protein operates within protein modification; protein glycosylation. Its function is as follows. Catalyzes the formation of the NeuAc-alpha-2,3-Gal-beta-1,4-GlcNAc-, NeuAc-alpha-2,3-Gal-beta-1,3-GlcNAc- and NeuAc-alpha-2,3-Gal-beta-1,3-GalNAc- sequences found in terminal carbohydrate groups of glycoproteins and glycolipids. The highest activity is toward Gal-beta-1,3-GlcNAc and the lowest toward Gal-beta-1,3-GalNAc. In Homo sapiens (Human), this protein is CMP-N-acetylneuraminate-beta-1,4-galactoside alpha-2,3-sialyltransferase (ST3GAL3).